A 200-amino-acid polypeptide reads, in one-letter code: ATP-dependent Clp protease proteolytic subunit 2 (200 aa).

Residue S101 is the Nucleophile of the active site. H126 is an active-site residue.

Belongs to the peptidase S14 family. In terms of assembly, fourteen ClpP subunits assemble into 2 heptameric rings which stack back to back to give a disk-like structure with a central cavity, resembling the structure of eukaryotic proteasomes.

It is found in the cytoplasm. It carries out the reaction Hydrolysis of proteins to small peptides in the presence of ATP and magnesium. alpha-casein is the usual test substrate. In the absence of ATP, only oligopeptides shorter than five residues are hydrolyzed (such as succinyl-Leu-Tyr-|-NHMec, and Leu-Tyr-Leu-|-Tyr-Trp, in which cleavage of the -Tyr-|-Leu- and -Tyr-|-Trp bonds also occurs).. Its function is as follows. Cleaves peptides in various proteins in a process that requires ATP hydrolysis. Has a chymotrypsin-like activity. Plays a major role in the degradation of misfolded proteins. This is ATP-dependent Clp protease proteolytic subunit 2 from Prochlorococcus marinus (strain MIT 9313).